The chain runs to 235 residues: UPF0173 metal-dependent hydrolase Oant_3663 (235 aa).

This sequence belongs to the UPF0173 family.

The polypeptide is UPF0173 metal-dependent hydrolase Oant_3663 (Brucella anthropi (strain ATCC 49188 / DSM 6882 / CCUG 24695 / JCM 21032 / LMG 3331 / NBRC 15819 / NCTC 12168 / Alc 37) (Ochrobactrum anthropi)).